We begin with the raw amino-acid sequence, 421 residues long: Putative leucine-rich repeat protein R380 (421 aa).

7 LRR repeats span residues 48 to 69 (YLEK…QYLP), 70 to 85 (KIKE…THIP), 89 to 110 (NLIK…NQSK), 111 to 129 (LLYL…IFLP), 130 to 150 (ECRE…NYFP), 151 to 172 (NLRI…SSLI), and 173 to 191 (ELNI…PQLV).

This is Putative leucine-rich repeat protein R380 from Acanthamoeba polyphaga (Amoeba).